We begin with the raw amino-acid sequence, 292 residues long: Oxidative stress-responsive serine-rich protein 1 (292 aa).

Residues 27–175 (SIASLSVGEG…SSDATQVSQA (149 aa)) form a disordered region. Over residues 65-83 (STRKSSRGVVRTQRRRRSK) the composition is skewed to basic residues. Residues threonine 143 and threonine 233 each carry the phosphothreonine modification.

This is Oxidative stress-responsive serine-rich protein 1 (OSER1) from Pongo abelii (Sumatran orangutan).